Here is a 387-residue protein sequence, read N- to C-terminus: Early growth response protein 3 (387 aa).

Residues 241–283 (PGFGSLPQPPLTLKPIRPRKYPNRPSKTPLHERPHACPAEGCD) form a disordered region. The span at 269-283 (PLHERPHACPAEGCD) shows a compositional bias: basic and acidic residues. 3 C2H2-type zinc fingers span residues 275–299 (HACPAEGCDRRFSRSDELTRHLRIH), 305–327 (FQCRICMRSFSRSDHLTTHIRTH), and 333–355 (FACEFCGRKFARSDERKRHAKIH). The tract at residues 348-387 (RKRHAKIHLKQKEKKSEKGGAPSASSAPTVSLAPVVTTCA) is disordered. Residues 350–360 (RHAKIHLKQKE) are compositionally biased toward basic residues.

It belongs to the EGR C2H2-type zinc-finger protein family.

Its subcellular location is the nucleus. Its function is as follows. Probable transcription factor involved in muscle spindle development. The sequence is that of Early growth response protein 3 (Egr3) from Mus musculus (Mouse).